The following is a 284-amino-acid chain: Succinate dehydrogenase [ubiquinone] iron-sulfur subunit, mitochondrial (284 aa).

A mitochondrion-targeting transit peptide spans 1–26 (MAAVVFSLRRSGPVFRLPGVLQVCRG). Residues 44-137 (KKFAIYRWDP…VSKIYPLPHM (94 aa)) form the 2Fe-2S ferredoxin-type domain. The [2Fe-2S] cluster site is built by Cys-97, Cys-102, Cys-105, and Cys-117. The 4Fe-4S ferredoxin-type domain maps to 180–210 (DRDKLDGLYECILCACCSTSCPSYWWNADKY). Residues Cys-190, Cys-193, and Cys-196 each contribute to the [4Fe-4S] cluster site. Cys-200 is a binding site for [3Fe-4S] cluster. Trp-205 is an a ubiquinone binding site. The [3Fe-4S] cluster site is built by Cys-247 and Cys-253. Position 257 (Cys-257) interacts with [4Fe-4S] cluster.

It belongs to the succinate dehydrogenase/fumarate reductase iron-sulfur protein family. Component of complex II composed of four subunits: the flavoprotein (FP) sdha, iron-sulfur protein (IP) sdhb, and a cytochrome b composed of sdhc and sdhd. [2Fe-2S] cluster serves as cofactor. The cofactor is [3Fe-4S] cluster. Requires [4Fe-4S] cluster as cofactor.

It is found in the mitochondrion inner membrane. It catalyses the reaction a quinone + succinate = fumarate + a quinol. The enzyme catalyses (R)-malate + a quinone = enol-oxaloacetate + a quinol. It carries out the reaction (S)-malate + a quinone = enol-oxaloacetate + a quinol. It participates in carbohydrate metabolism; tricarboxylic acid cycle; fumarate from succinate (eukaryal route): step 1/1. Its activity is regulated as follows. Enol-oxaloacetate inhibits the succinate dehydrogenase activity. Iron-sulfur protein (IP) subunit of the succinate dehydrogenase complex (mitochondrial respiratory chain complex II), responsible for transferring electrons from succinate to ubiquinone (coenzyme Q). SDH also oxidizes malate to the non-canonical enol form of oxaloacetate, enol-oxaloacetate. Enol-oxaloacetate, which is a potent inhibitor of the succinate dehydrogenase activity, is further isomerized into keto-oxaloacetate. The polypeptide is Succinate dehydrogenase [ubiquinone] iron-sulfur subunit, mitochondrial (sdhb) (Xenopus tropicalis (Western clawed frog)).